Here is a 227-residue protein sequence, read N- to C-terminus: Cytidylate kinase (227 aa).

12–20 (GPSGAGKGT) is a binding site for ATP.

It belongs to the cytidylate kinase family. Type 1 subfamily.

Its subcellular location is the cytoplasm. The catalysed reaction is CMP + ATP = CDP + ADP. It catalyses the reaction dCMP + ATP = dCDP + ADP. The polypeptide is Cytidylate kinase (Shigella boydii serotype 18 (strain CDC 3083-94 / BS512)).